Reading from the N-terminus, the 504-residue chain is Tachykinin-like peptides receptor 86C (504 aa).

Topologically, residues 1–84 (MSEIVDTELL…PYELPWEQKT (84 aa)) are extracellular. Residues Asn12, Asn28, and Asn36 are each glycosylated (N-linked (GlcNAc...) asparagine). A helical transmembrane segment spans residues 85–108 (IWAIIFGLMMFVAIAGNGIVLWIV). At 109–118 (TGHRSMRTVT) the chain is on the cytoplasmic side. The chain crosses the membrane as a helical span at residues 119 to 143 (NYFLLNLSIADLLMSSLNCVFNFIF). The Extracellular portion of the chain corresponds to 144 to 155 (MLNSDWPFGSIY). Residues 156-179 (CTINNFVANVTVSTSVFTLVAISF) form a helical membrane-spanning segment. Over 180–199 (DRYIAIVHPLKRRTSRRKVR) the chain is Cytoplasmic. A helical membrane pass occupies residues 200 to 224 (IILVLIWALSCVLSAPCLLYSSIMT). At 225–250 (KHYYNGKSRTVCFMMWPDGRYPTSMA) the chain is on the extracellular side. Residues 251–275 (DYAYNLIILVLTYGIPMIVMLICYS) form a helical membrane-spanning segment. The Cytoplasmic portion of the chain corresponds to 276-308 (LMGRVLWGSRSIGENTDRQMESMKSKRKVVRMF). The helical transmembrane segment at 309–330 (IAIVSIFAICWLPYHLFFIYAY) threads the bilayer. Topologically, residues 331-343 (HNNQVASTKYVQH) are extracellular. A helical membrane pass occupies residues 344–367 (MYLGFYWLAMSNAMVNPLIYYWMN). Topologically, residues 368 to 504 (KRFRMYFQRI…NPVELSPKQM (137 aa)) are cytoplasmic. Residues 393-450 (PKSRLTNKNSSNRHTRAETKSQWKRSTMETQIQQAPVTSSCREQRSAQQQQPPGSGTN) form a disordered region. Polar residues-rich tracts occupy residues 395–404 (SRLTNKNSSN) and 416–450 (KRST…SGTN).

It belongs to the G-protein coupled receptor 1 family. As to expression, expressed in central nervous system, as well as in subsets of neurons in each segment of the developing ventral ganglia.

The protein localises to the cell membrane. Functionally, receptor for tachykinin-like peptides. The protein is Tachykinin-like peptides receptor 86C (TkR86C) of Drosophila melanogaster (Fruit fly).